The following is a 250-amino-acid chain: Biosynthetic peptidoglycan transglycosylase (250 aa).

The helical transmembrane segment at 15–35 (AVLLFFVSSLGFVLLYRFVPV) threads the bilayer.

It belongs to the glycosyltransferase 51 family.

Its subcellular location is the cell inner membrane. The catalysed reaction is [GlcNAc-(1-&gt;4)-Mur2Ac(oyl-L-Ala-gamma-D-Glu-L-Lys-D-Ala-D-Ala)](n)-di-trans,octa-cis-undecaprenyl diphosphate + beta-D-GlcNAc-(1-&gt;4)-Mur2Ac(oyl-L-Ala-gamma-D-Glu-L-Lys-D-Ala-D-Ala)-di-trans,octa-cis-undecaprenyl diphosphate = [GlcNAc-(1-&gt;4)-Mur2Ac(oyl-L-Ala-gamma-D-Glu-L-Lys-D-Ala-D-Ala)](n+1)-di-trans,octa-cis-undecaprenyl diphosphate + di-trans,octa-cis-undecaprenyl diphosphate + H(+). Its pathway is cell wall biogenesis; peptidoglycan biosynthesis. Functionally, peptidoglycan polymerase that catalyzes glycan chain elongation from lipid-linked precursors. The chain is Biosynthetic peptidoglycan transglycosylase from Bdellovibrio bacteriovorus (strain ATCC 15356 / DSM 50701 / NCIMB 9529 / HD100).